A 302-amino-acid polypeptide reads, in one-letter code: Hydra actinoporin-like toxin 4 (302 aa).

A signal peptide spans 1–17; the sequence is MLLFKLIVCFFFIFAIG. The disordered stretch occupies residues 22–93; it reads KKDETSGENE…PAPKQTTTKK (72 aa). Low complexity predominate over residues 60 to 75; sequence KPPAAKPPAASKITKP. The span at 76–86 shows a compositional bias: pro residues; the sequence is QVPPQKKPPAP. The Cell attachment site signature appears at 274-276; sequence KAG.

Belongs to the actinoporin family. HALT subfamily. Octamer or nonamer in membranes. Monomer in the soluble state. In vitro, interacts with folate receptor alpha (of target organism).

The protein localises to the nematocyst. It localises to the secreted. Its subcellular location is the target cell membrane. Functionally, pore-forming protein that forms hydrophilic pores and causes cytolysis. Compared to equinatoxin-2 (AC P61914), it reveals lower cytolysis activity (5-12-fold difference, tested on erythrocytes), a larger pore size (probably 2-3 nm) and different affinity to membrane lipids (100-fold lower affinity to sphingomyelin). Binds to sulfatides. Shows cytolytic activity on HeLa cells, with a different potency than its paralogs (from most potent to less potent: HALT-4&gt;HALT-6~HALT-1&gt;HALT-3&gt;HALT-7&gt;HALT-2). This recombinant protein has the highest cytolytic activity compared to other rHALT proteins, probably due to its longer N-terminal sequence that may penetrate the lipid bilayer more effectively. Pore formation is a multi-step process that involves specific recognition of membrane lipid by a protein aromatic residues rich region, firm binding to the membrane (mainly driven by hydrophobic interactions) accompanied by the transfer of the N-terminal region to the lipid-water interface and finally pore formation after oligomerization of monomers. In vitro, binds to the folate receptor alpha (FOLR1), a GPI-anchored membrane protein that plays a major role in the uptake of folate/folic acid into cells via endocytosis, suggesting a possible involvement of this receptor in the mechanism of HALT-1-induced cell lysis. In vivo, does not cause visible paralysis in larvae of the blowfly Sarcophaga faculata, the most common arthropod prey of Hydra. The protein is Hydra actinoporin-like toxin 4 of Hydra vulgaris (Hydra).